The chain runs to 361 residues: Histidine biosynthesis bifunctional protein HisB (361 aa).

The histidinol-phosphatase stretch occupies residues 1–172 (MTQPTLFIDR…PKTTACKRPP (172 aa)). Residue aspartate 9 is the Nucleophile of the active site. 2 residues coordinate Mg(2+): aspartate 9 and aspartate 11. Catalysis depends on aspartate 11, which acts as the Proton donor. Cysteine 92, histidine 94, cysteine 100, and cysteine 102 together coordinate Zn(2+). Aspartate 129 provides a ligand contact to Mg(2+). The segment at 173–361 (RYAEVVRTTK…NELPSSKGVL (189 aa)) is imidazoleglycerol-phosphate dehydratase.

The protein in the N-terminal section; belongs to the histidinol-phosphatase family. It in the C-terminal section; belongs to the imidazoleglycerol-phosphate dehydratase family. The cofactor is Mg(2+). Zn(2+) serves as cofactor.

It is found in the cytoplasm. It catalyses the reaction D-erythro-1-(imidazol-4-yl)glycerol 3-phosphate = 3-(imidazol-4-yl)-2-oxopropyl phosphate + H2O. The enzyme catalyses L-histidinol phosphate + H2O = L-histidinol + phosphate. It participates in amino-acid biosynthesis; L-histidine biosynthesis; L-histidine from 5-phospho-alpha-D-ribose 1-diphosphate: step 6/9. It functions in the pathway amino-acid biosynthesis; L-histidine biosynthesis; L-histidine from 5-phospho-alpha-D-ribose 1-diphosphate: step 8/9. The polypeptide is Histidine biosynthesis bifunctional protein HisB (Actinobacillus pleuropneumoniae serotype 3 (strain JL03)).